We begin with the raw amino-acid sequence, 283 residues long: NAD kinase (283 aa).

Asp68 functions as the Proton acceptor in the catalytic mechanism. NAD(+) is bound by residues 68–69 (DG), Arg73, 142–143 (ND), Arg153, Arg170, Asp172, and 183–188 (TAYSLS).

It belongs to the NAD kinase family. A divalent metal cation is required as a cofactor.

Its subcellular location is the cytoplasm. It catalyses the reaction NAD(+) + ATP = ADP + NADP(+) + H(+). Involved in the regulation of the intracellular balance of NAD and NADP, and is a key enzyme in the biosynthesis of NADP. Catalyzes specifically the phosphorylation on 2'-hydroxyl of the adenosine moiety of NAD to yield NADP. The polypeptide is NAD kinase (Symbiobacterium thermophilum (strain DSM 24528 / JCM 14929 / IAM 14863 / T)).